The primary structure comprises 1275 residues: Serine/threonine-protein kinase ULK4 (1275 aa).

The region spanning 4 to 280 (FILYEEIGRG…WTRLLQHSFW (277 aa)) is the Protein kinase domain. D121 functions as the Proton acceptor in the catalytic mechanism. Disordered regions lie at residues 299 to 346 (SRNT…EFRP) and 359 to 393 (FLLSSRPTPRTSTAVEVSPGEDRTHCSPQKTSPLT). Positions 336–346 (FRLENPTEFRP) are enriched in basic and acidic residues. Polar residues-rich tracts occupy residues 363 to 373 (SRPTPRTSTAV) and 384 to 393 (CSPQKTSPLT). 6 HEAT repeats span residues 727-765 (LIQEKDFVSTIIRLLESPSTYIRAKAFLVLLYILIYNRE), 842-880 (LKMCLPLMPIVLHLVTSQVFRPQVVTEEFLFSYGTILSH), 926-964 (STVVDYILPPLVSLVQSQNVEWRLFSLRLLSETTSLLVN), 1025-1063 (LVEESKLIPLIFEVTLEHQESILGNTMQSVIALLNNLVA), 1151-1189 (NRPLTDLISLLIPLLPNEDPEIFDVSSKCLSILVQLYGG), and 1213-1253 (PKEQ…LAPG).

The protein belongs to the protein kinase superfamily. Ser/Thr protein kinase family. APG1/unc-51/ULK1 subfamily.

The catalysed reaction is L-seryl-[protein] + ATP = O-phospho-L-seryl-[protein] + ADP + H(+). It carries out the reaction L-threonyl-[protein] + ATP = O-phospho-L-threonyl-[protein] + ADP + H(+). In terms of biological role, may be involved in the remodeling of cytoskeletal components, such as alpha-tubulin, and in this way regulates neurite branching and elongation, as well as cell motility. The protein is Serine/threonine-protein kinase ULK4 (ULK4) of Pongo abelii (Sumatran orangutan).